The primary structure comprises 74 residues: uncharacterized protein (74 aa).

The stretch at 29–63 (LNSKKSALQKDKELQQQAKAQESALAGEELRRRAL) forms a coiled coil.

This is an uncharacterized protein from Pseudoalteromonas phage PM2 (Bacteriophage PM2).